The following is a 329-amino-acid chain: Fructose-1,6-bisphosphatase class 1 (329 aa).

Positions 84, 103, 105, and 106 each coordinate Mg(2+). Residues 106–109 (DGSS), asparagine 196, and lysine 262 contribute to the substrate site. Glutamate 268 lines the Mg(2+) pocket.

The protein belongs to the FBPase class 1 family. As to quaternary structure, homotetramer. Mg(2+) is required as a cofactor.

Its subcellular location is the cytoplasm. It carries out the reaction beta-D-fructose 1,6-bisphosphate + H2O = beta-D-fructose 6-phosphate + phosphate. Its pathway is carbohydrate biosynthesis; gluconeogenesis. The chain is Fructose-1,6-bisphosphatase class 1 from Shewanella sediminis (strain HAW-EB3).